The chain runs to 189 residues: Peptidyl-tRNA hydrolase (189 aa).

Tyrosine 15 is a tRNA binding site. The active-site Proton acceptor is histidine 20. The tRNA site is built by phenylalanine 66, asparagine 68, and asparagine 114.

This sequence belongs to the PTH family. Monomer.

It is found in the cytoplasm. It catalyses the reaction an N-acyl-L-alpha-aminoacyl-tRNA + H2O = an N-acyl-L-amino acid + a tRNA + H(+). Its function is as follows. Hydrolyzes ribosome-free peptidyl-tRNAs (with 1 or more amino acids incorporated), which drop off the ribosome during protein synthesis, or as a result of ribosome stalling. Catalyzes the release of premature peptidyl moieties from peptidyl-tRNA molecules trapped in stalled 50S ribosomal subunits, and thus maintains levels of free tRNAs and 50S ribosomes. This Streptococcus pneumoniae (strain Taiwan19F-14) protein is Peptidyl-tRNA hydrolase.